Reading from the N-terminus, the 393-residue chain is MNSSCKSRVFNIISIIMVSMLILSLGAFANNNKAKADSHSKQLEINVKSDKVPQKVKDLAQQQFAGYAKALDKQSNAKTGKYELGEAFKIYKFNGEEDNSYYYPVIKDGKIVYTLTLSPKNKDDLNKSKEDMNYSVKISNFIAKDLDQIKDKNSNITVLTDEKGFYFEEDGKVRLVKATPLPGNVKEKESAKTVSAKLKQELKNTVTPTKVEENEAIQEDQVQYENTLKNFKIREQQFDNSWCAGFSMAALLNATKNTDTYNAHDIMRTLYPEVSEQDLPNCATFPNQMIEYGKSQGRDIHYQEGVPSYEQVDQLTKDNVGIMILAQSVSQNPNDPHLGHALAVVGNAKINDQEKLIYWNPWDTELSIQDADSSLLHLSFNRDYNWYGSMIGY.

The N-terminal stretch at 1–36 is a signal peptide; that stretch reads MNSSCKSRVFNIISIIMVSMLILSLGAFANNNKAKA. Residues 37–219 constitute a propeptide that is removed on maturation; it reads DSHSKQLEIN…KVEENEAIQE (183 aa). Catalysis depends on residues Cys243, His340, and Asn360.

This sequence belongs to the peptidase C47 family. In terms of assembly, in the cytoplasm, prematurely activated/folded SspB forms a stable non-covalent complex with SspC. In terms of processing, proteolytically cleaved by staphylococcal serine protease (SspA).

It is found in the secreted. Its activity is regulated as follows. Prematurely activated/folded staphopain B is inhibited by staphostatin B (SspC), which is probably required to protect staphylococcal cytoplasmic proteins from degradation by SspB. Also inactivated by E-64 and stimulated by EDTA. Cysteine protease that plays an important role in the inhibition of host innate immune response. Degrades host elastin, fibrogen, fibronectin and kininogen. Blocks phagocytosis of opsonised S.aureus by neutrophils and monocytes by inducing their death in a proteolytic activity-dependent manner. Decreases surface expression of the 'don't eat me' signal CD31 on neutrophils. Cleaves host galectin-3/LGALS3, thereby inhibiting the neutrophil-activating ability of the lectin. This Staphylococcus aureus (strain NCTC 8325 / PS 47) protein is Staphopain B (sspB).